The primary structure comprises 200 residues: 3-isopropylmalate dehydratase small subunit (200 aa).

The protein belongs to the LeuD family. LeuD type 1 subfamily. In terms of assembly, heterodimer of LeuC and LeuD.

It carries out the reaction (2R,3S)-3-isopropylmalate = (2S)-2-isopropylmalate. It functions in the pathway amino-acid biosynthesis; L-leucine biosynthesis; L-leucine from 3-methyl-2-oxobutanoate: step 2/4. Functionally, catalyzes the isomerization between 2-isopropylmalate and 3-isopropylmalate, via the formation of 2-isopropylmaleate. The sequence is that of 3-isopropylmalate dehydratase small subunit from Pectobacterium atrosepticum (strain SCRI 1043 / ATCC BAA-672) (Erwinia carotovora subsp. atroseptica).